Here is a 203-residue protein sequence, read N- to C-terminus: Cupin-domain-containing oxidoreductase fogC (203 aa).

Positions 105–171 (DFAPGVESPL…GNGTLPGRML (67 aa)) are cupin-like domain.

Belongs to the virC family.

The protein operates within secondary metabolite biosynthesis. Its function is as follows. Cupin-domain-containing oxidoreductase; part of the gene cluster that mediates the biosynthesis of flavoglaucin and congeners (including aspergin, dihydroauroglaucin and auroglaucin), prenylated salicylaldehyde derivatives carrying a saturated or an unsaturated C-7 side chain. The PKS fogA releases the carboxylic acid (8E,10E,12E)-3,5,7-trihydroxytetradeca-8,10,12-trienoic acid as its product, as well as derivatives with one and two double bonds. FogA is indeed able to reduce the initial triketide, thus being at least partially responsible for the differently saturated heptyl side chains of flavoglaucin congeners. The oxidoreductases fogB, fogC and fogD modify the nascent polyketide in fogA-bound form and, together, fogA, fogB, fogC and fogD are necessary for the formation of the aromatic core and the cyclized PKS products are released as salicyl alcohols. In particular, fogB is responsible for oxidation of a hydroxyl group or reduction of remaining double bond(s) at the C-7 residue whereas fogD is probably involved in the reductive release of the modified PKS products. The cytochrome P450 monooxygenase fogE is then responsible for the hydroxylation at C-3 of the benzene ring. The fogE products are substrates of the prenyltransferase fogH and the prenylated benzyl alcohols are subsequently oxidized by the fogF to produce the final aryl aldehydes flavoglaucin and congeners. The short-chain dehydrogenase fogG does not seem to be involved in the biosynthesis of the prenylated salicylaldehyde derivatives. This is Cupin-domain-containing oxidoreductase fogC from Aspergillus ruber (strain CBS 135680).